Consider the following 390-residue polypeptide: Queuine tRNA-ribosyltransferase (390 aa).

Aspartate 92 functions as the Proton acceptor in the catalytic mechanism. Substrate contacts are provided by residues 92 to 96 (DSGGF), aspartate 146, glutamine 195, and glycine 222. An RNA binding region spans residues 253–259 (GVGTPED). Residue aspartate 272 is the Nucleophile of the active site. The segment at 277-281 (TRNAR) is RNA binding; important for wobble base 34 recognition. Zn(2+) is bound by residues cysteine 310, cysteine 312, cysteine 315, and histidine 354.

It belongs to the queuine tRNA-ribosyltransferase family. As to quaternary structure, homodimer. Within each dimer, one monomer is responsible for RNA recognition and catalysis, while the other monomer binds to the replacement base PreQ1. Zn(2+) serves as cofactor.

The enzyme catalyses 7-aminomethyl-7-carbaguanine + guanosine(34) in tRNA = 7-aminomethyl-7-carbaguanosine(34) in tRNA + guanine. The protein operates within tRNA modification; tRNA-queuosine biosynthesis. Functionally, catalyzes the base-exchange of a guanine (G) residue with the queuine precursor 7-aminomethyl-7-deazaguanine (PreQ1) at position 34 (anticodon wobble position) in tRNAs with GU(N) anticodons (tRNA-Asp, -Asn, -His and -Tyr). Catalysis occurs through a double-displacement mechanism. The nucleophile active site attacks the C1' of nucleotide 34 to detach the guanine base from the RNA, forming a covalent enzyme-RNA intermediate. The proton acceptor active site deprotonates the incoming PreQ1, allowing a nucleophilic attack on the C1' of the ribose to form the product. After dissociation, two additional enzymatic reactions on the tRNA convert PreQ1 to queuine (Q), resulting in the hypermodified nucleoside queuosine (7-(((4,5-cis-dihydroxy-2-cyclopenten-1-yl)amino)methyl)-7-deazaguanosine). This is Queuine tRNA-ribosyltransferase from Acidovorax sp. (strain JS42).